The sequence spans 1914 residues: Zinc finger protein Rlf (1914 aa).

Phosphoserine is present on Ser-41. Positions 521–540 (KQYRRRDLTDQHKEKRDKKP) are enriched in basic and acidic residues. The disordered stretch occupies residues 521–541 (KQYRRRDLTDQHKEKRDKKPI). The C2H2-type 1 zinc-finger motif lies at 582 to 604 (YTCPVCIKKFKRKEMFVPHVMEH). Lys-622 is covalently cross-linked (Glycyl lysine isopeptide (Lys-Gly) (interchain with G-Cter in SUMO2)). Ser-632 and Ser-634 each carry phosphoserine. 5 consecutive C2H2-type zinc fingers follow at residues 671-696 (YPCPGTDCSRVFKQFKYLSVHLKAEH), 714-736 (EKCTYCRRHFMSAFHLREHEQVH), 742-766 (YMCVSIDCYARFGSVNELLNHKQKH), 771-795 (YKCELNGCNIVFSDLGQLYHHEAQH), and 801-825 (YTCNFLGCKKFYYSKIEYQNHLSMH). Lys-839 participates in a covalent cross-link: Glycyl lysine isopeptide (Lys-Gly) (interchain with G-Cter in SUMO2). Positions 882–907 (TETAENLKENSDSNSSDQLSHSSSAS) are disordered. A compositionally biased stretch (low complexity) spans 893 to 907 (DSNSSDQLSHSSSAS). The C2H2-type 7 zinc-finger motif lies at 954–979 (FTCGFDGCGSTYKNARGMQKHLRKVH). Positions 993-1028 (LFPSLGNEHNQTTEKLDAEPKPCSDTNSDSPDEGLD) are disordered. A compositionally biased stretch (basic and acidic residues) spans 1003 to 1014 (QTTEKLDAEPKP). C2H2-type zinc fingers lie at residues 1127–1152 (FFCELQGCKYEFVTREALLMHYLKKH) and 1172–1195 (FQCHICQRSFTRKTHLRIHYKNKH). The disordered stretch occupies residues 1231–1290 (LGGDPSSNSEKPHCHPKKDECSSETDLESSCEETESKTSDISSPIGSHREEQEGREGRGS). The span at 1240 to 1251 (EKPHCHPKKDEC) shows a compositional bias: basic and acidic residues. The segment covering 1252–1263 (SSETDLESSCEE) has biased composition (acidic residues). The span at 1277-1289 (SHREEQEGREGRG) shows a compositional bias: basic and acidic residues. 5 C2H2-type zinc fingers span residues 1310–1335 (FHCIHKTCNSSFTNLKGLIRHYRTVH), 1362–1387 (FACKYKECNKRFLCSKALAKHCSDSH), 1407–1432 (FSCNQPQCPAVFYTFNKLKHHLMEQH), 1444–1469 (IHCDLNGCGQIFTHRSNYSQHVYYRH), and 1549–1574 (YPCMVQGCLSVVKLESSIVRHYKRTH). Residue Lys-1423 forms a Glycyl lysine isopeptide (Lys-Gly) (interchain with G-Cter in SUMO2) linkage. Residues Lys-1599 and Lys-1611 each participate in a glycyl lysine isopeptide (Lys-Gly) (interchain with G-Cter in SUMO2) cross-link. Positions 1620-1654 (SERTEHSHSPGDSSAPIQNTDCCHSSERDGGQKGC) are disordered. The segment covering 1629 to 1642 (PGDSSAPIQNTDCC) has biased composition (polar residues). Lys-1696 participates in a covalent cross-link: Glycyl lysine isopeptide (Lys-Gly) (interchain with G-Cter in SUMO2). Positions 1725–1757 (ESETRQHSSGQENTVKNPTHVPKENFRKHSQPR) are disordered. Residues 1731–1741 (HSSGQENTVKN) show a composition bias toward polar residues. Residue Lys-1762 forms a Glycyl lysine isopeptide (Lys-Gly) (interchain with G-Cter in SUMO2) linkage. A disordered region spans residues 1783–1807 (KEDDFDDWEPSEHLTLSNSSQSSND). The span at 1796-1807 (LTLSNSSQSSND) shows a compositional bias: polar residues.

Belongs to the krueppel C2H2-type zinc-finger protein family. Interacts with RIT1 and RIT2. In terms of tissue distribution, widely expressed in fetal and adult tissues.

It localises to the nucleus. In terms of biological role, may be involved in transcriptional regulation. This chain is Zinc finger protein Rlf (RLF), found in Homo sapiens (Human).